The primary structure comprises 307 residues: UAP56-interacting factor (307 aa).

A compositionally biased stretch (low complexity) spans 1-25; that stretch reads MSGFGAAALLSGSSAAAGTRSGSSD. 2 disordered regions span residues 1–28 and 41–85; these read MSGFGAAALLSGSSAAAGTRSGSSDSLE and NKKE…KNHL. The UAP56-binding motif signature appears at 26 to 44; the sequence is SLEKIDMSLDDIIKLNKKE. The segment covering 57-78 has biased composition (polar residues); it reads LQQNRTQQFRTPGSKWGIQQQK.

This sequence belongs to the UIF family. In terms of tissue distribution, widely expressed.

The protein resides in the nucleus. It localises to the nucleoplasm. It is found in the nucleus speckle. Required for mRNA export from the nucleus to the cytoplasm. Acts as an adapter that uses the DDX39B/UAP56-NFX1 pathway to ensure efficient mRNA export and delivering to the nuclear pore. The chain is UAP56-interacting factor (FYTTD1) from Gallus gallus (Chicken).